A 257-amino-acid polypeptide reads, in one-letter code: Neuroendocrine secretory protein 55 (257 aa).

The signal sequence occupies residues 1 to 46 (MDRRSRAQQWRRARHNYNDLCPPIGRRAATALLWLSCSIALLRALA). The segment at 61-257 (SFLNAHHRSA…RKGPIPIRRH (197 aa)) is disordered. A compositionally biased stretch (low complexity) spans 70-82 (AAAAAAAQVLPES). The span at 86 to 103 (ESDHEHEEVEPELARPEC) shows a compositional bias: basic and acidic residues. Over residues 104–139 (LEYDQDDYETETDSETEPESDIESETEIETEPETEP) the composition is skewed to acidic residues. Over residues 200–211 (EPQRGPLDQDPR) the composition is skewed to basic and acidic residues. Residues 227 to 237 (PRRCKTRRPAR) are compositionally biased toward basic residues.

This sequence belongs to the NESP55 family. Post-translationally, binds keratan sulfate chains. May be proteolytically processed to give rise to a number of active peptides.

It is found in the cytoplasmic vesicle. It localises to the secretory vesicle. The protein resides in the secreted. This Mus musculus (Mouse) protein is Neuroendocrine secretory protein 55.